A 286-amino-acid polypeptide reads, in one-letter code: MRHTLPIAPQFYVTAPQACPYLDGRRERKLFTALQGDQAETLNNSLSKQGFRRSQNVLYRPSCTDCAACLSARIRVADFAPRRGHKRISRRNEHLFRNPRSAWATEEQYALFRTYLDTRHADGGMADMDVFEFAAMIEETPVKTRVIEYRDRTDGDDLAAVCLTDILDDGLSLVYSFFAPELQKNSLGTYVILDHIALAQEAGLPYVYLGYWVPGSTKMGYKASFPALEVHVNGDWQDIGDPADYDTQTHPLSTDPIAQQVAQITLPDLRGENGRSDGLRGFSDGP.

This sequence belongs to the R-transferase family. Bpt subfamily.

The protein localises to the cytoplasm. The enzyme catalyses N-terminal L-glutamyl-[protein] + L-leucyl-tRNA(Leu) = N-terminal L-leucyl-L-glutamyl-[protein] + tRNA(Leu) + H(+). It carries out the reaction N-terminal L-aspartyl-[protein] + L-leucyl-tRNA(Leu) = N-terminal L-leucyl-L-aspartyl-[protein] + tRNA(Leu) + H(+). Functions in the N-end rule pathway of protein degradation where it conjugates Leu from its aminoacyl-tRNA to the N-termini of proteins containing an N-terminal aspartate or glutamate. The polypeptide is Aspartate/glutamate leucyltransferase (Jannaschia sp. (strain CCS1)).